The primary structure comprises 187 residues: dITP/XTP pyrophosphatase (187 aa).

Residue 7-12 (TNNPYK) participates in substrate binding. Positions 36 and 65 each coordinate Mg(2+). Catalysis depends on Asp-65, which acts as the Proton acceptor. Substrate is bound by residues Thr-66, 140–143 (FGYD), Lys-163, and 168–169 (HR).

This sequence belongs to the HAM1 NTPase family. Homodimer. Mg(2+) is required as a cofactor.

It catalyses the reaction XTP + H2O = XMP + diphosphate + H(+). The enzyme catalyses dITP + H2O = dIMP + diphosphate + H(+). The catalysed reaction is ITP + H2O = IMP + diphosphate + H(+). Pyrophosphatase that catalyzes the hydrolysis of nucleoside triphosphates to their monophosphate derivatives, with a high preference for the non-canonical purine nucleotides XTP (xanthosine triphosphate), dITP (deoxyinosine triphosphate) and ITP. Seems to function as a house-cleaning enzyme that removes non-canonical purine nucleotides from the nucleotide pool, thus preventing their incorporation into DNA/RNA and avoiding chromosomal lesions. The sequence is that of dITP/XTP pyrophosphatase from Pyrobaculum aerophilum (strain ATCC 51768 / DSM 7523 / JCM 9630 / CIP 104966 / NBRC 100827 / IM2).